The chain runs to 464 residues: Siroheme synthase (464 aa).

The precorrin-2 dehydrogenase /sirohydrochlorin ferrochelatase stretch occupies residues 1-203 (MEFLPLFHNL…GQGAEAERLL (203 aa)). Residues 22–23 (EI) and 43–44 (PE) contribute to the NAD(+) site. Ser128 carries the phosphoserine modification. The interval 216–464 (GEVYLVGAGP…AWFEGAQATL (249 aa)) is uroporphyrinogen-III C-methyltransferase. Position 225 (Pro225) interacts with S-adenosyl-L-methionine. Asp248 (proton acceptor) is an active-site residue. Lys270 serves as the catalytic Proton donor. S-adenosyl-L-methionine is bound by residues 301-303 (GGD), Ile306, 331-332 (TA), Met383, and Gly412.

The protein in the N-terminal section; belongs to the precorrin-2 dehydrogenase / sirohydrochlorin ferrochelatase family. It in the C-terminal section; belongs to the precorrin methyltransferase family.

The catalysed reaction is uroporphyrinogen III + 2 S-adenosyl-L-methionine = precorrin-2 + 2 S-adenosyl-L-homocysteine + H(+). It catalyses the reaction precorrin-2 + NAD(+) = sirohydrochlorin + NADH + 2 H(+). It carries out the reaction siroheme + 2 H(+) = sirohydrochlorin + Fe(2+). It participates in cofactor biosynthesis; adenosylcobalamin biosynthesis; precorrin-2 from uroporphyrinogen III: step 1/1. Its pathway is cofactor biosynthesis; adenosylcobalamin biosynthesis; sirohydrochlorin from precorrin-2: step 1/1. It functions in the pathway porphyrin-containing compound metabolism; siroheme biosynthesis; precorrin-2 from uroporphyrinogen III: step 1/1. The protein operates within porphyrin-containing compound metabolism; siroheme biosynthesis; siroheme from sirohydrochlorin: step 1/1. It participates in porphyrin-containing compound metabolism; siroheme biosynthesis; sirohydrochlorin from precorrin-2: step 1/1. In terms of biological role, multifunctional enzyme that catalyzes the SAM-dependent methylations of uroporphyrinogen III at position C-2 and C-7 to form precorrin-2 via precorrin-1. Then it catalyzes the NAD-dependent ring dehydrogenation of precorrin-2 to yield sirohydrochlorin. Finally, it catalyzes the ferrochelation of sirohydrochlorin to yield siroheme. This is Siroheme synthase from Pseudomonas syringae pv. tomato (strain ATCC BAA-871 / DC3000).